Consider the following 334-residue polypeptide: Glycerol-3-phosphate dehydrogenase [NAD(P)+] 2 (334 aa).

NADPH-binding residues include tryptophan 16, arginine 36, arginine 37, and lysine 110. Lysine 110 and glycine 140 together coordinate sn-glycerol 3-phosphate. Alanine 144 is an NADPH binding site. Sn-glycerol 3-phosphate is bound by residues lysine 195, aspartate 248, serine 258, arginine 259, and asparagine 260. Lysine 195 acts as the Proton acceptor in catalysis. Residue arginine 259 coordinates NADPH. Positions 282 and 284 each coordinate NADPH.

Belongs to the NAD-dependent glycerol-3-phosphate dehydrogenase family.

Its subcellular location is the cytoplasm. It carries out the reaction sn-glycerol 3-phosphate + NAD(+) = dihydroxyacetone phosphate + NADH + H(+). The enzyme catalyses sn-glycerol 3-phosphate + NADP(+) = dihydroxyacetone phosphate + NADPH + H(+). It participates in membrane lipid metabolism; glycerophospholipid metabolism. Functionally, catalyzes the reduction of the glycolytic intermediate dihydroxyacetone phosphate (DHAP) to sn-glycerol 3-phosphate (G3P), the key precursor for phospholipid synthesis. This is Glycerol-3-phosphate dehydrogenase [NAD(P)+] 2 from Mycobacterium bovis (strain ATCC BAA-935 / AF2122/97).